The following is a 591-amino-acid chain: V-type ATP synthase alpha chain (591 aa).

ATP is bound at residue 233-240; that stretch reads GPFGAGKT.

Belongs to the ATPase alpha/beta chains family.

It carries out the reaction ATP + H2O + 4 H(+)(in) = ADP + phosphate + 5 H(+)(out). Functionally, produces ATP from ADP in the presence of a proton gradient across the membrane. The V-type alpha chain is a catalytic subunit. The chain is V-type ATP synthase alpha chain from Streptococcus pyogenes serotype M3 (strain ATCC BAA-595 / MGAS315).